Here is a 655-residue protein sequence, read N- to C-terminus: WD repeat-containing protein 70 (655 aa).

2 disordered regions span residues 1 to 24 and 43 to 170; these read MEHS…LAVT and FEQT…PIHR. Basic and acidic residues predominate over residues 45-78; that stretch reads QTRRTAVERSRKTLEAREKEEEMNREKELRKQLE. The span at 99–112 shows a compositional bias: low complexity; the sequence is RDTSSSDSDHSSGS. Residues 148–165 show a composition bias toward acidic residues; it reads EEGEDDDDDDLEDEGEED. WD repeat units lie at residues 181–220, 228–269, 282–322, 331–370, 377–416, 422–467, and 470–509; these read HGTK…ASFK, CECH…ECIK, GHTA…KQKS, GKKV…HPKF, APGT…KPLF, PTLF…RVYE, and ITDA…QRGA. A Glycyl lysine isopeptide (Lys-Gly) (interchain with G-Cter in SUMO2) cross-link involves residue K297. An N6-acetyllysine modification is found at K453. The span at 541–566 shows a compositional bias: basic and acidic residues; sequence REPRQRSTRKQLEKDRLDPLKSHKPE. The tract at residues 541–582 is disordered; it reads REPRQRSTRKQLEKDRLDPLKSHKPEPPVAGPGRGGRVGTHG. The segment covering 572-582 has biased composition (gly residues); the sequence is PGRGGRVGTHG. Position 580 is a phosphothreonine (T580). Glycyl lysine isopeptide (Lys-Gly) (interchain with G-Cter in SUMO2) cross-links involve residues K591 and K597. 2 positions are modified to phosphoserine: S622 and S639. The interval 632 to 655 is disordered; the sequence is TMFAQVESDDEESKNEPEWKKRKI. A compositionally biased stretch (basic and acidic residues) spans 645-655; that stretch reads KNEPEWKKRKI.

It belongs to the WD repeat GAD-1 family.

This chain is WD repeat-containing protein 70 (Wdr70), found in Rattus norvegicus (Rat).